The primary structure comprises 871 residues: Protein translocase subunit SecA (871 aa).

Residues Gln-80, 98 to 102 (GEGKT), and Asp-537 contribute to the ATP site.

The protein belongs to the SecA family. In terms of assembly, monomer and homodimer. Part of the essential Sec protein translocation apparatus which comprises SecA, SecYEG and auxiliary proteins SecDF. Other proteins may also be involved.

Its subcellular location is the cell inner membrane. It is found in the cytoplasm. The catalysed reaction is ATP + H2O + cellular proteinSide 1 = ADP + phosphate + cellular proteinSide 2.. Functionally, part of the Sec protein translocase complex. Interacts with the SecYEG preprotein conducting channel. Has a central role in coupling the hydrolysis of ATP to the transfer of proteins into and across the cell membrane, serving as an ATP-driven molecular motor driving the stepwise translocation of polypeptide chains across the membrane. In Thermotoga sp. (strain RQ2), this protein is Protein translocase subunit SecA.